The sequence spans 116 residues: Aspartate 1-decarboxylase (116 aa).

S25 acts as the Schiff-base intermediate with substrate; via pyruvic acid in catalysis. S25 bears the Pyruvic acid (Ser) mark. T57 is a substrate binding site. The active-site Proton donor is the Y58. A substrate-binding site is contributed by 73 to 75 (GAA).

This sequence belongs to the PanD family. In terms of assembly, heterooctamer of four alpha and four beta subunits. Pyruvate serves as cofactor. Is synthesized initially as an inactive proenzyme, which is activated by self-cleavage at a specific serine bond to produce a beta-subunit with a hydroxyl group at its C-terminus and an alpha-subunit with a pyruvoyl group at its N-terminus.

Its subcellular location is the cytoplasm. The enzyme catalyses L-aspartate + H(+) = beta-alanine + CO2. The protein operates within cofactor biosynthesis; (R)-pantothenate biosynthesis; beta-alanine from L-aspartate: step 1/1. Functionally, catalyzes the pyruvoyl-dependent decarboxylation of aspartate to produce beta-alanine. This Leptospira borgpetersenii serovar Hardjo-bovis (strain JB197) protein is Aspartate 1-decarboxylase.